The chain runs to 345 residues: Beta-2-glycoprotein 1 (345 aa).

The signal sequence occupies residues 1-19; the sequence is MVSPVLALFSAFLCHVAIA. Sushi domains lie at 21-81, 82-139, 140-202, and 203-262; these read RICP…RCVP, RVCP…ACAR, ITCP…ECLE, and VKCP…TCRE. 11 cysteine pairs are disulfide-bonded: Cys-23–Cys-66, Cys-51–Cys-79, Cys-84–Cys-124, Cys-110–Cys-137, Cys-142–Cys-188, Cys-174–Cys-200, Cys-205–Cys-248, Cys-234–Cys-260, Cys-264–Cys-315, Cys-300–Cys-325, and Cys-307–Cys-345. O-linked (GalNAc...) threonine glycosylation occurs at Thr-33. N-linked (GlcNAc...) asparagine glycosylation is found at Asn-105, Asn-117, Asn-162, Asn-183, and Asn-193. The segment at 263–345 is sushi-like; sequence SCKLPVKKAT…KTDASELTPC (83 aa).

Expressed by the liver and secreted in plasma.

The protein localises to the secreted. In terms of biological role, binds to various kinds of negatively charged substances such as heparin, phospholipids, and dextran sulfate. May prevent activation of the intrinsic blood coagulation cascade by binding to phospholipids on the surface of damaged cells. The polypeptide is Beta-2-glycoprotein 1 (Apoh) (Mus musculus (Mouse)).